A 143-amino-acid polypeptide reads, in one-letter code: Large ribosomal subunit protein uL15 (143 aa).

The disordered stretch occupies residues 1–52 (MKLNTLAPAAGSKSAPKRLGRGIGSGLGKTSGKGHKGQKARSGGYHKVGFEG). The span at 21–31 (RGIGSGLGKTS) shows a compositional bias: gly residues.

The protein belongs to the universal ribosomal protein uL15 family. Part of the 50S ribosomal subunit.

In terms of biological role, binds to the 23S rRNA. The protein is Large ribosomal subunit protein uL15 of Francisella tularensis subsp. mediasiatica (strain FSC147).